Reading from the N-terminus, the 443-residue chain is Spermidine hydroxycinnamoyltransferase 1 (443 aa).

Active-site proton acceptor residues include histidine 167 and aspartate 390.

The protein belongs to the plant acyltransferase family.

Functionally, hydroxycinnamoyl transferase that catalyzes the transfer of an acyl from p-coumaryol-CoA to spermidine, to produce coumaroyl spermidine. Can use feruloyl-CoA as acyl donor. Contributes to the natural variation of spermidine-based phenolamides in rice cultivars. This chain is Spermidine hydroxycinnamoyltransferase 1, found in Oryza sativa subsp. japonica (Rice).